A 548-amino-acid polypeptide reads, in one-letter code: Membrane protein insertase YidC (548 aa).

The helical transmembrane segment at 6–26 threads the bilayer; that stretch reads NLLVIALLFVSFMIWQAWEQD. The interval 28–56 is disordered; sequence NPQPQTQQTTQTTTTAAGSAADQGVPASG. A compositionally biased stretch (low complexity) spans 29 to 42; it reads PQPQTQQTTQTTTT. Transmembrane regions (helical) follow at residues 350-370, 424-444, 458-478, and 499-519; these read FVGN…GIMY, FPLI…MGSI, LSAQ…MFFI, and PVIF…YYIV.

The protein belongs to the OXA1/ALB3/YidC family. Type 1 subfamily. As to quaternary structure, interacts with the Sec translocase complex via SecD. Specifically interacts with transmembrane segments of nascent integral membrane proteins during membrane integration.

The protein resides in the cell inner membrane. Functionally, required for the insertion and/or proper folding and/or complex formation of integral membrane proteins into the membrane. Involved in integration of membrane proteins that insert both dependently and independently of the Sec translocase complex, as well as at least some lipoproteins. Aids folding of multispanning membrane proteins. The sequence is that of Membrane protein insertase YidC from Salmonella heidelberg (strain SL476).